A 395-amino-acid polypeptide reads, in one-letter code: MSVIRVTDLDLKGKRVFIRADLNVPVKDGKVTSDARISASMGTIDYCLKQGGKVMVTSHLGRPEEGVWSEENSLKPVADNISERLGKPARLIKDWVDGNFDVAEGELVILENCRFNKGEKKNADETAQKYAKLCDVFVMDAFGTAHRAEASTYGIAKYAPVACAGILLTEELDALTKALLNPARPMVAIVGGSKVSTKLTVLESLSEKVDQLVVGGGIANTFLKAAGQNVGKSLCEDDLVPIAKMLMEKMAKRNATIPIAVDVVVGKKFDASEPAVLKNADAVTDDDMIFDIGPKSARELSDIIMKAGTVVWNGPVGVFEFDQFGEGTKTIAMAIADTDAFTLAGGGDTIAAIQKYDIYDRVSYISTAGGAFLEFLEGKKLPAVEILEQRAAGSR.

Substrate contacts are provided by residues 21–23 (DLN), arginine 36, 59–62 (HLGR), arginine 114, and arginine 147. ATP-binding positions include lysine 198, glutamate 320, and 346–349 (GGDT).

Belongs to the phosphoglycerate kinase family. In terms of assembly, monomer.

Its subcellular location is the cytoplasm. It catalyses the reaction (2R)-3-phosphoglycerate + ATP = (2R)-3-phospho-glyceroyl phosphate + ADP. It participates in carbohydrate degradation; glycolysis; pyruvate from D-glyceraldehyde 3-phosphate: step 2/5. The polypeptide is Phosphoglycerate kinase (Nitrosospira multiformis (strain ATCC 25196 / NCIMB 11849 / C 71)).